The chain runs to 353 residues: RNA 3'-terminal phosphate cyclase (353 aa).

ATP is bound by residues glutamine 100 and 289–292 (HMSD). The Tele-AMP-histidine intermediate role is filled by histidine 315.

This sequence belongs to the RNA 3'-terminal cyclase family. Type 1 subfamily.

It localises to the cytoplasm. It carries out the reaction a 3'-end 3'-phospho-ribonucleotide-RNA + ATP = a 3'-end 2',3'-cyclophospho-ribonucleotide-RNA + AMP + diphosphate. In terms of biological role, catalyzes the conversion of 3'-phosphate to a 2',3'-cyclic phosphodiester at the end of RNA. The mechanism of action of the enzyme occurs in 3 steps: (A) adenylation of the enzyme by ATP; (B) transfer of adenylate to an RNA-N3'P to produce RNA-N3'PP5'A; (C) and attack of the adjacent 2'-hydroxyl on the 3'-phosphorus in the diester linkage to produce the cyclic end product. The biological role of this enzyme is unknown but it is likely to function in some aspects of cellular RNA processing. This Ignicoccus hospitalis (strain KIN4/I / DSM 18386 / JCM 14125) protein is RNA 3'-terminal phosphate cyclase.